Consider the following 670-residue polypeptide: Tyramine beta-hydroxylase (670 aa).

Over residues 26–35 (HHQLAYHHHK) the composition is skewed to basic residues. Positions 26–63 (HHQLAYHHHKQEQQQQQQQQQQQQAKQKQKQNGVQQGR) are disordered. A compositionally biased stretch (low complexity) spans 38–61 (QQQQQQQQQQQQAKQKQKQNGVQQ). The chain crosses the membrane as a helical span at residues 65–81 (PTFMPVMLLLLMATLLT). The DOMON domain occupies 104–220 (KEIKLSWMVD…GTMYVVWARG (117 aa)). The N-linked (GlcNAc...) asparagine glycan is linked to N235. Residue Y281 is part of the active site. Cystine bridges form between C283/C334 and C319/C344. Cu(2+)-binding residues include H312 and H313. Cu(2+)-binding residues include H382, H461, H463, and M536. 3 cysteine pairs are disulfide-bonded: C439/C552, C443/C613, and C515/C537. H461 is a catalytic residue. The N-linked (GlcNAc...) asparagine glycan is linked to N614.

It belongs to the copper type II ascorbate-dependent monooxygenase family. Is most likely a monomer under physiological conditions, although under conditions of high pH and low ionic strength the dimeric form predominates. Both forms are equally active. Cu(2+) is required as a cofactor. In terms of tissue distribution, present in head and in neurons innervating the oviduct (at protein level).

It is found in the membrane. It catalyses the reaction tyramine + L-ascorbate + O2 = (R)-octopamine + L-dehydroascorbate + H2O. Functionally, catalyzes the hydroxylation of tyramine into octopamine, a neurotransmitter involved in ovulation and locomotion. Functions in an amine-mediated Bacc-dependent signaling pathway that negatively regulates acute ethanol sensitivity. Involved in facilitation of nociceptive escape behavior in response to potentially damaging stimuli, such as high temperatures. In Drosophila melanogaster (Fruit fly), this protein is Tyramine beta-hydroxylase (Tbh).